The primary structure comprises 154 residues: Transcriptional regulator MraZ (154 aa).

SpoVT-AbrB domains lie at 6–53 and 83–126; these read NSEA…PENV and VEVI…SKEI.

The protein belongs to the MraZ family. In terms of assembly, forms oligomers.

It localises to the cytoplasm. The protein localises to the nucleoid. In Phocaeicola vulgatus (strain ATCC 8482 / DSM 1447 / JCM 5826 / CCUG 4940 / NBRC 14291 / NCTC 11154) (Bacteroides vulgatus), this protein is Transcriptional regulator MraZ.